A 458-amino-acid polypeptide reads, in one-letter code: Elongation factor 1-alpha (458 aa).

Position 2 is a n,N,N-trimethylglycine (Gly2). Lys3 carries the N6,N6-dimethyllysine; alternate modification. Lys3 bears the N6-methyllysine; alternate mark. Positions 5–240 (KTHVNVVVIG…DAIEPPVRPS (236 aa)) constitute a tr-type G domain. Residues 14–21 (GHVDSGKS) are G1. Position 14–21 (14–21 (GHVDSGKS)) interacts with GTP. An N6-methyllysine modification is found at Lys30. Residues 70 to 74 (GITID) form a G2 region. Lys79 bears the N6,N6,N6-trimethyllysine mark. Positions 91-94 (DAPG) are G3. Residues 91-95 (DAPGH) and 153-156 (NKMD) each bind GTP. The G4 stretch occupies residues 153–156 (NKMD). A G5 region spans residues 192 to 194 (SGW). N6,N6-dimethyllysine; alternate is present on Lys316. Lys316 is modified (N6-methyllysine; alternate). At Lys390 the chain carries N6-methyllysine.

The protein belongs to the TRAFAC class translation factor GTPase superfamily. Classic translation factor GTPase family. EF-Tu/EF-1A subfamily.

It localises to the cytoplasm. This protein promotes the GTP-dependent binding of aminoacyl-tRNA to the A-site of ribosomes during protein biosynthesis. This Mucor circinelloides f. lusitanicus (Mucor racemosus var. lusitanicus) protein is Elongation factor 1-alpha (TEF-1).